The sequence spans 132 residues: uncharacterized protein (132 aa).

The first 24 residues, 1-24 (MVTIGSSSLVLFLFFVVFVQITYT), serve as a signal peptide directing secretion. Helical transmembrane passes span 75–95 (YVNV…ILGI) and 112–132 (ESAI…VYIH).

It localises to the membrane. This is an uncharacterized protein from Saccharomyces cerevisiae (strain ATCC 204508 / S288c) (Baker's yeast).